The sequence spans 340 residues: Ferredoxin--NADP reductase (340 aa).

The FAD site is built by aspartate 33, glutamine 41, tyrosine 46, alanine 86, phenylalanine 120, aspartate 286, and threonine 327.

The protein belongs to the ferredoxin--NADP reductase type 2 family. Homodimer. The cofactor is FAD.

The enzyme catalyses 2 reduced [2Fe-2S]-[ferredoxin] + NADP(+) + H(+) = 2 oxidized [2Fe-2S]-[ferredoxin] + NADPH. The chain is Ferredoxin--NADP reductase from Rickettsia rickettsii (strain Sheila Smith).